The chain runs to 1533 residues: Glycogen debranching enzyme (1533 aa).

At Ser-64 the chain carries Phosphoserine. Residues Asp-527, His-530, and Asp-628 contribute to the active site.

Belongs to the glycogen debranching enzyme family. As to quaternary structure, monomer. Interacts with NHLRC1/malin. Ubiquitinated.

The protein resides in the cytoplasm. It carries out the reaction Transfers a segment of a (1-&gt;4)-alpha-D-glucan to a new position in an acceptor, which may be glucose or a (1-&gt;4)-alpha-D-glucan.. The catalysed reaction is Hydrolysis of (1-&gt;6)-alpha-D-glucosidic branch linkages in glycogen phosphorylase limit dextrin.. In terms of biological role, multifunctional enzyme acting as 1,4-alpha-D-glucan:1,4-alpha-D-glucan 4-alpha-D-glycosyltransferase and amylo-1,6-glucosidase in glycogen degradation. This is Glycogen debranching enzyme (AGL) from Canis lupus familiaris (Dog).